The sequence spans 293 residues: Pantothenate synthetase (293 aa).

38 to 45 (MGALHEGH) contributes to the ATP binding site. The active-site Proton donor is histidine 45. A (R)-pantoate-binding site is contributed by glutamine 69. Glutamine 69 lines the beta-alanine pocket. ATP is bound at residue 155-158 (GEKD). Glutamine 161 is a binding site for (R)-pantoate. An ATP-binding site is contributed by 192 to 195 (QSSR).

It belongs to the pantothenate synthetase family. As to quaternary structure, homodimer.

It is found in the cytoplasm. The catalysed reaction is (R)-pantoate + beta-alanine + ATP = (R)-pantothenate + AMP + diphosphate + H(+). Its pathway is cofactor biosynthesis; (R)-pantothenate biosynthesis; (R)-pantothenate from (R)-pantoate and beta-alanine: step 1/1. Catalyzes the condensation of pantoate with beta-alanine in an ATP-dependent reaction via a pantoyl-adenylate intermediate. The chain is Pantothenate synthetase from Hyphomonas neptunium (strain ATCC 15444).